The chain runs to 151 residues: Large ribosomal subunit protein eL8 (151 aa).

The protein belongs to the eukaryotic ribosomal protein eL8 family. In terms of assembly, part of the 50S ribosomal subunit. Probably part of the RNase P complex.

The protein resides in the cytoplasm. In terms of biological role, multifunctional RNA-binding protein that recognizes the K-turn motif in ribosomal RNA, the RNA component of RNase P, box H/ACA, box C/D and box C'/D' sRNAs. The sequence is that of Large ribosomal subunit protein eL8 from Pyrobaculum neutrophilum (strain DSM 2338 / JCM 9278 / NBRC 100436 / V24Sta) (Thermoproteus neutrophilus).